The primary structure comprises 1093 residues: Semaphorin 5c (1093 aa).

The first 34 residues, 1–34 (MNMLILKLPKMFSQLWLLLILSLLTLEGPQPSTG), serve as a signal peptide directing secretion. Asparagine 48 carries N-linked (GlcNAc...) asparagine glycosylation. The region spanning 50–495 (SRYISYQDLM…TDLALTRIPA (446 aa)) is the Sema domain. Disulfide bonds link cysteine 118/cysteine 128 and cysteine 146/cysteine 155. Asparagine 162, asparagine 182, asparagine 285, and asparagine 295 each carry an N-linked (GlcNAc...) asparagine glycan. 2 cysteine pairs are disulfide-bonded: cysteine 271–cysteine 376 and cysteine 296–cysteine 338. The N-linked (GlcNAc...) asparagine glycan is linked to asparagine 341. One can recognise a PSI domain in the interval 497 to 546 (HCSRHVSQSSCLNSMDPYCGWNELVERCMPQPQDSSVLQHWHQAPQITCP). 3 TSP type-1 domains span residues 553-605 (DGGW…TNCT), 607-663 (HGGW…PPCP), and 671-726 (DGGW…QSCQ). Asparagine 603 carries an N-linked (GlcNAc...) asparagine glycan. Intrachain disulfides connect cysteine 619/cysteine 656, cysteine 623/cysteine 662, cysteine 634/cysteine 646, cysteine 683/cysteine 720, cysteine 687/cysteine 725, and cysteine 698/cysteine 710. Asparagine 745 carries N-linked (GlcNAc...) asparagine glycosylation. 3 consecutive TSP type-1 domains span residues 794–834 (DSAD…HACP), 850–901 (HGEW…VPCE), and 904–953 (LGWS…NECE). Disulfide bonds link cysteine 862–cysteine 895, cysteine 866–cysteine 900, and cysteine 877–cysteine 885. The chain crosses the membrane as a helical span at residues 960–980 (TATLPIVIFVGLLFTVACCLA). N-linked (GlcNAc...) asparagine glycosylation is found at asparagine 998 and asparagine 1046. Residues 1018 to 1056 (PTKDYYDQRPKRQSSFRMPAKTSNLGNGNGTLNRNNMHQ) form a disordered region. Residues 1041 to 1053 (NLGNGNGTLNRNN) are compositionally biased toward low complexity.

This sequence belongs to the semaphorin family. As to expression, in egg chambers, high levels of expression in the follicle cells, with little to no expression in the germ cells (at protein level). In stage 3 to 7 egg chambers, planar polarized at the basal epithelial surface (at protein level).

It localises to the apical cell membrane. The protein resides in the lateral cell membrane. The protein localises to the endosome. Functionally, regulates the motility of migrating epithelial cells by providing guidance cues within the migratory environment and may also play a role in development of the olfactory system. May act as a positive axonal guidance cue. Function in neurons is essential for adult survival and is important for climbing behavior. Promotes collective migration of follicular epithelial cells in egg chambers, likely by acting at the leading edge of the basal epithelium cells to provide guidance cues across the cell boundary to the trailing edge of the cell ahead. The transmembrane receptor PlexA on the trailing edge of the cell ahead, appears to transduce this signal to suppress the formation of protrusions. Involved in olfactory avoidance behavior. This chain is Semaphorin 5c, found in Drosophila melanogaster (Fruit fly).